The chain runs to 295 residues: Tyrosine recombinase XerC (295 aa).

A Core-binding (CB) domain is found at 1–85; the sequence is MLTALNRYWD…ALRRFLSFLV (85 aa). Residues 106 to 285 form the Tyr recombinase domain; that stretch reads HLPKNMDGEQ…NFQHLAEVYD (180 aa). Residues arginine 145, lysine 169, histidine 237, arginine 240, and histidine 263 contribute to the active site. Tyrosine 272 acts as the O-(3'-phospho-DNA)-tyrosine intermediate in catalysis.

This sequence belongs to the 'phage' integrase family. XerC subfamily. Forms a cyclic heterotetrameric complex composed of two molecules of XerC and two molecules of XerD.

It is found in the cytoplasm. In terms of biological role, site-specific tyrosine recombinase, which acts by catalyzing the cutting and rejoining of the recombining DNA molecules. The XerC-XerD complex is essential to convert dimers of the bacterial chromosome into monomers to permit their segregation at cell division. It also contributes to the segregational stability of plasmids. This Haemophilus influenzae (strain PittEE) protein is Tyrosine recombinase XerC.